The following is a 381-amino-acid chain: G-protein coupled receptor homolog Q2/3L (381 aa).

At 1 to 91 (MNYTLSTVSS…HCDDGVDTTS (91 aa)) the chain is on the extracellular side. Asn2, Asn15, Asn19, Asn41, Asn50, Asn56, and Asn62 each carry an N-linked (GlcNAc...) asparagine; by host glycan. A helical transmembrane segment spans residues 92–112 (FGLITLYSTIFFLGLFGNIIV). Residues 113–126 (LTVLRKYKIKTIQD) are Cytoplasmic-facing. A helical transmembrane segment spans residues 127–147 (MFLLNLTLSDLIFVLVFPFNL). At 148–165 (YDSIAKQWSLGDCLCKFK) the chain is on the extracellular side. The chain crosses the membrane as a helical span at residues 166–186 (AMFYFVGFYNSMSFITLMSID). Residues 187-206 (RYLAVVHPVKSMPIRTKRYG) are Cytoplasmic-facing. A helical transmembrane segment spans residues 207–227 (IVLSMVVWIVSTIESFPIMLF). Over 228-251 (YETKKVYGITYCHVFYNDNAKIWK) the chain is Extracellular. A helical transmembrane segment spans residues 252–272 (LFINFEINIFGMIIPLTILLY). The Cytoplasmic segment spans residues 273 to 294 (CYYKILNTLKTSQTKNKKAIKM). The helical transmembrane segment at 295-315 (VFLIVICSVLFLLPFSVTVFV) threads the bilayer. Over 316–336 (SSLYLLNVFSGCMALRFVNLA) the chain is Extracellular. The helical transmembrane segment at 337–357 (VHVAEIVSLCHCFINPLIYAF) threads the bilayer. Residues 358–381 (CSREFTKKLLRLRTTSSAGSISIG) lie on the Cytoplasmic side of the membrane.

Belongs to the G-protein coupled receptor 1 family.

It is found in the host cell membrane. Functionally, putative chemokine receptor. This Ovis aries (Sheep) protein is G-protein coupled receptor homolog Q2/3L.